Here is a 406-residue protein sequence, read N- to C-terminus: Acetylornithine/succinyldiaminopimelate aminotransferase (406 aa).

Pyridoxal 5'-phosphate-binding positions include 108–109 (GT) and Phe141. Arg144 is a binding site for N(2)-acetyl-L-ornithine. 226–229 (DEVQ) contributes to the pyridoxal 5'-phosphate binding site. Lys255 is subject to N6-(pyridoxal phosphate)lysine. Residue Ser283 coordinates N(2)-acetyl-L-ornithine. Residue Thr284 participates in pyridoxal 5'-phosphate binding.

It belongs to the class-III pyridoxal-phosphate-dependent aminotransferase family. ArgD subfamily. Homodimer. It depends on pyridoxal 5'-phosphate as a cofactor.

The protein resides in the cytoplasm. It carries out the reaction N(2)-acetyl-L-ornithine + 2-oxoglutarate = N-acetyl-L-glutamate 5-semialdehyde + L-glutamate. It catalyses the reaction N-succinyl-(2S,6S)-2,6-diaminopimelate + 2-oxoglutarate = (S)-2-succinylamino-6-oxoheptanedioate + L-glutamate. It participates in amino-acid biosynthesis; L-arginine biosynthesis; N(2)-acetyl-L-ornithine from L-glutamate: step 4/4. The protein operates within amino-acid biosynthesis; L-lysine biosynthesis via DAP pathway; LL-2,6-diaminopimelate from (S)-tetrahydrodipicolinate (succinylase route): step 2/3. In terms of biological role, involved in both the arginine and lysine biosynthetic pathways. This Escherichia coli (strain K12) protein is Acetylornithine/succinyldiaminopimelate aminotransferase.